Reading from the N-terminus, the 370-residue chain is UDP-N-acetylglucosamine--N-acetylmuramyl-(pentapeptide) pyrophosphoryl-undecaprenol N-acetylglucosamine transferase (370 aa).

UDP-N-acetyl-alpha-D-glucosamine is bound by residues 15 to 17 (TGG), Asn-129, Arg-170, Ser-200, Ile-253, and Gln-298.

Belongs to the glycosyltransferase 28 family. MurG subfamily.

The protein resides in the cell inner membrane. It catalyses the reaction di-trans,octa-cis-undecaprenyl diphospho-N-acetyl-alpha-D-muramoyl-L-alanyl-D-glutamyl-meso-2,6-diaminopimeloyl-D-alanyl-D-alanine + UDP-N-acetyl-alpha-D-glucosamine = di-trans,octa-cis-undecaprenyl diphospho-[N-acetyl-alpha-D-glucosaminyl-(1-&gt;4)]-N-acetyl-alpha-D-muramoyl-L-alanyl-D-glutamyl-meso-2,6-diaminopimeloyl-D-alanyl-D-alanine + UDP + H(+). The protein operates within cell wall biogenesis; peptidoglycan biosynthesis. In terms of biological role, cell wall formation. Catalyzes the transfer of a GlcNAc subunit on undecaprenyl-pyrophosphoryl-MurNAc-pentapeptide (lipid intermediate I) to form undecaprenyl-pyrophosphoryl-MurNAc-(pentapeptide)GlcNAc (lipid intermediate II). The protein is UDP-N-acetylglucosamine--N-acetylmuramyl-(pentapeptide) pyrophosphoryl-undecaprenol N-acetylglucosamine transferase of Salinibacter ruber (strain DSM 13855 / M31).